Consider the following 295-residue polypeptide: Acetylglutamate kinase (295 aa).

Residues Gly67–Gly68, Arg89, and Asn191 contribute to the substrate site.

It belongs to the acetylglutamate kinase family. ArgB subfamily.

It localises to the cytoplasm. It carries out the reaction N-acetyl-L-glutamate + ATP = N-acetyl-L-glutamyl 5-phosphate + ADP. It functions in the pathway amino-acid biosynthesis; L-arginine biosynthesis; N(2)-acetyl-L-ornithine from L-glutamate: step 2/4. Functionally, catalyzes the ATP-dependent phosphorylation of N-acetyl-L-glutamate. The protein is Acetylglutamate kinase of Nitrosomonas eutropha (strain DSM 101675 / C91 / Nm57).